The sequence spans 282 residues: Chromatin modification-related protein YNG2 (282 aa).

Residues Leu35–Lys86 adopt a coiled-coil conformation. A disordered region spans residues Asp123 to Glu217. Residues Ala129–Ser143 are compositionally biased toward low complexity. The residue at position 183 (Ser183) is a Phosphoserine. Thr185 carries the post-translational modification Phosphothreonine. Position 188 is a phosphoserine (Ser188). Residues Ile191–Asn203 show a composition bias toward basic and acidic residues. The span at Ser204–Pro214 shows a compositional bias: polar residues. Residues Thr222–Glu271 form a PHD-type zinc finger. Zn(2+) is bound by residues Cys225, Cys227, Cys238, Cys243, His249, Cys252, Cys265, and Cys268.

The protein belongs to the ING family. In terms of assembly, interacts with H3K4me3 and to a lesser extent with H3K4me2. Component of the NuA4 histone acetyltransferase complex composed of at least ACT1, ARP4, YAF9, VID21, SWC4, EAF3, EAF5, EAF6, EAF7, EPL1, ESA1, TRA1 and YNG2.

The protein resides in the nucleus. Functionally, component of the NuA4 histone acetyltransferase complex which is involved in transcriptional activation of selected genes principally by acetylation of nucleosomal histone H4 and H2A. The NuA4 complex is also involved in DNA repair. Involved in cell cycle progression and meiosis. This chain is Chromatin modification-related protein YNG2 (YNG2), found in Saccharomyces cerevisiae (strain ATCC 204508 / S288c) (Baker's yeast).